The sequence spans 484 residues: ATP synthase subunit beta (484 aa).

The disordered stretch occupies residues 104–123; it reads ERGPIGSKQTMPIHADAPPF. 156–163 is a binding site for ATP; sequence GGAGVGKT.

Belongs to the ATPase alpha/beta chains family. In terms of assembly, F-type ATPases have 2 components, CF(1) - the catalytic core - and CF(0) - the membrane proton channel. CF(1) has five subunits: alpha(3), beta(3), gamma(1), delta(1), epsilon(1). CF(0) has three main subunits: a(1), b(2) and c(9-12). The alpha and beta chains form an alternating ring which encloses part of the gamma chain. CF(1) is attached to CF(0) by a central stalk formed by the gamma and epsilon chains, while a peripheral stalk is formed by the delta and b chains.

It localises to the cell inner membrane. The enzyme catalyses ATP + H2O + 4 H(+)(in) = ADP + phosphate + 5 H(+)(out). Its function is as follows. Produces ATP from ADP in the presence of a proton gradient across the membrane. The catalytic sites are hosted primarily by the beta subunits. This chain is ATP synthase subunit beta, found in Zymomonas mobilis subsp. mobilis (strain ATCC 31821 / ZM4 / CP4).